Consider the following 41-residue polypeptide: Ornatin-A2 (41 aa).

A Cell attachment site motif is present at residues 33–35 (RGD).

The protein belongs to the ornatin family.

It is found in the secreted. Potent inhibitor of fibrinogen interaction with platelet receptors expressed on glycoprotein IIb-IIIa complex. May prevent blood from clotting during either feeding and/or storage of ingested blood. This chain is Ornatin-A2, found in Placobdella ornata (Turtle leech).